Consider the following 122-residue polypeptide: Large ribosomal subunit protein bL12 (122 aa).

This sequence belongs to the bacterial ribosomal protein bL12 family. As to quaternary structure, homodimer. Part of the ribosomal stalk of the 50S ribosomal subunit. Forms a multimeric L10(L12)X complex, where L10 forms an elongated spine to which 2 to 4 L12 dimers bind in a sequential fashion. Binds GTP-bound translation factors.

Forms part of the ribosomal stalk which helps the ribosome interact with GTP-bound translation factors. Is thus essential for accurate translation. This is Large ribosomal subunit protein bL12 from Stutzerimonas stutzeri (strain A1501) (Pseudomonas stutzeri).